We begin with the raw amino-acid sequence, 208 residues long: Inosine triphosphate pyrophosphatase (208 aa).

Alanine 2 carries the post-translational modification N-acetylalanine. Residue 14-19 coordinates ITP; sequence TGNAKK. A Mg(2+)-binding site is contributed by glutamate 44. ITP-binding positions include lysine 56, 72 to 73, lysine 89, 149 to 152, lysine 172, and 177 to 178; these read DT, FGWD, and HR.

This sequence belongs to the HAM1 NTPase family. As to quaternary structure, homodimer. Requires Mg(2+) as cofactor. Mn(2+) is required as a cofactor.

The protein localises to the cytoplasm. It carries out the reaction ITP + H2O = IMP + diphosphate + H(+). It catalyses the reaction dITP + H2O = dIMP + diphosphate + H(+). The enzyme catalyses XTP + H2O = XMP + diphosphate + H(+). The catalysed reaction is N(6)-hydroxy-dATP + H2O = N(6)-hydroxy-dAMP + diphosphate + H(+). In terms of biological role, pyrophosphatase that hydrolyzes the non-canonical purine nucleotides inosine triphosphate (ITP), deoxyinosine triphosphate (dITP) as well as 2'-deoxy-N-6-hydroxylaminopurine triphosphate (dHAPTP) and xanthosine 5'-triphosphate (XTP) to their respective monophosphate derivatives. The enzyme does not distinguish between the deoxy- and ribose forms. Probably excludes non-canonical purines from RNA and DNA precursor pools, thus preventing their incorporation into RNA and DNA and avoiding chromosomal lesions. The sequence is that of Inosine triphosphate pyrophosphatase from Bos taurus (Bovine).